We begin with the raw amino-acid sequence, 158 residues long: Endoribonuclease YbeY (158 aa).

3 residues coordinate Zn(2+): His124, His128, and His134.

This sequence belongs to the endoribonuclease YbeY family. The cofactor is Zn(2+).

Its subcellular location is the cytoplasm. Functionally, single strand-specific metallo-endoribonuclease involved in late-stage 70S ribosome quality control and in maturation of the 3' terminus of the 16S rRNA. The sequence is that of Endoribonuclease YbeY from Caldicellulosiruptor bescii (strain ATCC BAA-1888 / DSM 6725 / KCTC 15123 / Z-1320) (Anaerocellum thermophilum).